Reading from the N-terminus, the 183-residue chain is Capsid protein (183 aa).

The disordered stretch occupies residues 136–183 (NAPILSTLPETTVVRRRGRSPRRRTPSPRRRRSQSPRRRRSQSRESQC). Over residues 149–176 (VRRRGRSPRRRTPSPRRRRSQSPRRRRS) the composition is skewed to basic residues. Phosphoserine; by host is present on residues serine 155, serine 162, and serine 170. Residues 155–161 (SPRRRTP) form a 1; half-length repeat. Residues 155–177 (SPRRRTPSPRRRRSQSPRRRRSQ) form a 3 X 8 AA repeats of S-P-R-R-R-[PR]-S-Q region. The Bipartite nuclear localization signal signature appears at 158–175 (RRTPSPRRRRSQSPRRRR). 2 tandem repeats follow at residues 162–169 (SPRRRRSQ) and 170–177 (SPRRRRSQ). Positions 177–183 (QSRESQC) are RNA binding.

It belongs to the orthohepadnavirus core antigen family. As to quaternary structure, homodimerizes, then multimerizes. Interacts with cytosol exposed regions of viral L glycoprotein present in the reticulum-to-Golgi compartment. Interacts with human FLNB. Phosphorylated form interacts with host importin alpha; this interaction depends on the exposure of the NLS, which itself depends upon genome maturation and/or phosphorylation of the capsid protein. Interacts with host NUP153. Post-translationally, phosphorylated by host SRPK1, SRPK2, and maybe protein kinase C or GAPDH. Phosphorylation is critical for pregenomic RNA packaging. Protein kinase C phosphorylation is stimulated by HBx protein and may play a role in transport of the viral genome to the nucleus at the late step during the viral replication cycle.

It localises to the virion. The protein resides in the host cytoplasm. Its function is as follows. Self assembles to form an icosahedral capsid. Most capsids appear to be large particles with an icosahedral symmetry of T=4 and consist of 240 copies of capsid protein, though a fraction forms smaller T=3 particles consisting of 180 capsid proteins. Entering capsids are transported along microtubules to the nucleus. Phosphorylation of the capsid is thought to induce exposure of nuclear localization signal in the C-terminal portion of the capsid protein that allows binding to the nuclear pore complex via the importin (karyopherin-) alpha and beta. Capsids are imported in intact form through the nuclear pore into the nuclear basket, where it probably binds NUP153. Only capsids that contain the mature viral genome can release the viral DNA and capsid protein into the nucleoplasm. Immature capsids get stuck in the basket. Capsids encapsulate the pre-genomic RNA and the P protein. Pre-genomic RNA is reverse-transcribed into DNA while the capsid is still in the cytoplasm. The capsid can then either be directed to the nucleus, providing more genomes for transcription, or bud through the endoplasmic reticulum to provide new virions. The sequence is that of Capsid protein from Homo sapiens (Human).